The chain runs to 26 residues: uncharacterized protein (26 aa).

Residues I3–L23 form a helical membrane-spanning segment.

It is found in the membrane. This is an uncharacterized protein from Helicobacter pylori (strain J99 / ATCC 700824) (Campylobacter pylori J99).